A 306-amino-acid chain; its full sequence is Motility gene repressor MogR (306 aa).

Its subcellular location is the cytoplasm. Transcriptional repressor of flagellar motility genes, such as flaA, during extracellular growth at 37 degrees Celsius and during intracellular infection. Binds directly to gene promoter region and probably prevents RNA polymerase binding. At low temperatures, MogR repression activity is modulated by the DegU response regulator in an unknown mechanism. Required for full virulence. This is Motility gene repressor MogR (mogR) from Listeria monocytogenes serotype 4b (strain F2365).